Reading from the N-terminus, the 772-residue chain is Cadherin-19 (772 aa).

The signal sequence occupies residues 1–21 (MNCYLLLRFMLGIPLLWPCLG). Residues 22 to 43 (ATENSQTKKVKQPVRSHLRVKR) constitute a propeptide that is removed on maturation. Cadherin domains follow at residues 44–148 (GWVW…EPKF), 149–256 (LDEP…KPIF), 257–370 (KESL…PPLF), 371–470 (LLPY…APEF), and 470–581 (FSQY…STQT). Residues 44 to 596 (GWVWNQFFVP…LVLSMGFKTE (553 aa)) lie on the Extracellular side of the membrane. 2 N-linked (GlcNAc...) asparagine glycosylation sites follow: asparagine 57 and asparagine 74. Residues asparagine 419, asparagine 437, asparagine 508, asparagine 515, asparagine 516, and asparagine 534 are each glycosylated (N-linked (GlcNAc...) asparagine). A helical transmembrane segment spans residues 597–617 (VIIAILICIMIIFGFIFLTLG). The Cytoplasmic portion of the chain corresponds to 618–772 (LKQRRKQILF…MFGSAVQSNN (155 aa)).

Expressed in many tissues, with the exception of uterus.

The protein localises to the cell membrane. Cadherins are calcium-dependent cell adhesion proteins. They preferentially interact with themselves in a homophilic manner in connecting cells; cadherins may thus contribute to the sorting of heterogeneous cell types. The protein is Cadherin-19 (CDH19) of Homo sapiens (Human).